The sequence spans 134 residues: Small ribosomal subunit protein uS8c (134 aa).

The protein belongs to the universal ribosomal protein uS8 family. Part of the 30S ribosomal subunit.

It localises to the plastid. It is found in the chloroplast. One of the primary rRNA binding proteins, it binds directly to 16S rRNA central domain where it helps coordinate assembly of the platform of the 30S subunit. This is Small ribosomal subunit protein uS8c (rps8) from Draba nemorosa (Woodland whitlowgrass).